Reading from the N-terminus, the 445-residue chain is Sodium/proton-dependent alanine carrier protein (445 aa).

Transmembrane regions (helical) follow at residues 41–61 (IAYG…IGAA), 103–123 (AAII…SIAD), 129–149 (FGIP…FTIF), 159–179 (AEIV…AIIA), 188–208 (VFGL…GILG), 249–269 (AFSI…MILF), 304–324 (TLFP…FAFT), 349–369 (AFFA…VKTA), and 375–395 (MGDI…LLLF).

It belongs to the alanine or glycine:cation symporter (AGCS) (TC 2.A.25) family. The N-terminus is blocked.

The protein resides in the cell membrane. Functionally, mediates the active transport of alanine, driven by either an H(+) or Na(+) gradient. This Bacillus sp. (strain PS3) protein is Sodium/proton-dependent alanine carrier protein.